We begin with the raw amino-acid sequence, 291 residues long: ATP phosphoribosyltransferase (291 aa).

It belongs to the ATP phosphoribosyltransferase family. Long subfamily. Mg(2+) serves as cofactor.

Its subcellular location is the cytoplasm. The enzyme catalyses 1-(5-phospho-beta-D-ribosyl)-ATP + diphosphate = 5-phospho-alpha-D-ribose 1-diphosphate + ATP. The protein operates within amino-acid biosynthesis; L-histidine biosynthesis; L-histidine from 5-phospho-alpha-D-ribose 1-diphosphate: step 1/9. Feedback inhibited by histidine. Its function is as follows. Catalyzes the condensation of ATP and 5-phosphoribose 1-diphosphate to form N'-(5'-phosphoribosyl)-ATP (PR-ATP). Has a crucial role in the pathway because the rate of histidine biosynthesis seems to be controlled primarily by regulation of HisG enzymatic activity. This Geotalea daltonii (strain DSM 22248 / JCM 15807 / FRC-32) (Geobacter daltonii) protein is ATP phosphoribosyltransferase.